We begin with the raw amino-acid sequence, 209 residues long: Redox-sensing transcriptional repressor Rex (209 aa).

The H-T-H motif DNA-binding region spans 16–55 (VYIQVLTGLKRDGVEVISSEKLARACSVNPSQIRKDLAYF). 90 to 95 (GVGNLG) contacts NAD(+).

Belongs to the transcriptional regulatory Rex family. Homodimer.

The protein localises to the cytoplasm. In terms of biological role, modulates transcription in response to changes in cellular NADH/NAD(+) redox state. The sequence is that of Redox-sensing transcriptional repressor Rex from Maridesulfovibrio salexigens (strain ATCC 14822 / DSM 2638 / NCIMB 8403 / VKM B-1763) (Desulfovibrio salexigens).